The following is a 323-amino-acid chain: o-succinylbenzoate synthase (323 aa).

Residue Lys-134 is the Proton donor of the active site. Mg(2+) contacts are provided by Asp-162, Glu-191, and Asp-214. The active-site Proton acceptor is Lys-236.

This sequence belongs to the mandelate racemase/muconate lactonizing enzyme family. MenC type 1 subfamily. It depends on a divalent metal cation as a cofactor.

It carries out the reaction (1R,6R)-6-hydroxy-2-succinyl-cyclohexa-2,4-diene-1-carboxylate = 2-succinylbenzoate + H2O. Its pathway is quinol/quinone metabolism; 1,4-dihydroxy-2-naphthoate biosynthesis; 1,4-dihydroxy-2-naphthoate from chorismate: step 4/7. It participates in quinol/quinone metabolism; menaquinone biosynthesis. Converts 2-succinyl-6-hydroxy-2,4-cyclohexadiene-1-carboxylate (SHCHC) to 2-succinylbenzoate (OSB). The sequence is that of o-succinylbenzoate synthase from Yersinia pseudotuberculosis serotype O:3 (strain YPIII).